The chain runs to 780 residues: Molybdenum cofactor sulfurase (780 aa).

Residue Lys246 is modified to N6-(pyridoxal phosphate)lysine. Residue Cys413 is part of the active site. Residues 635–780 form the MOSC domain; it reads LRLLRQSGQR…MTCGDVVLVE (146 aa). Ser734 is subject to Phosphoserine.

The protein belongs to the class-V pyridoxal-phosphate-dependent aminotransferase family. MOCOS subfamily. The cofactor is pyridoxal 5'-phosphate.

The enzyme catalyses Mo-molybdopterin + L-cysteine + AH2 = thio-Mo-molybdopterin + L-alanine + A + H2O. Sulfurates the molybdenum cofactor. Sulfation of molybdenum is essential for xanthine dehydrogenase (XDH) and aldehyde oxidase (ADO) enzymes in which molybdenum cofactor is liganded by 1 oxygen and 1 sulfur atom in active form. This Drosophila yakuba (Fruit fly) protein is Molybdenum cofactor sulfurase.